Consider the following 174-residue polypeptide: Calcineurin subunit B (174 aa).

4 EF-hand domains span residues 21-56, 60-88, 90-125, and 131-166; these read EEIE…ASNP, RLFS…FSVH, NKEE…MVGT, and QLQQ…SNVT. Residues D34, N36, S38, S40, E45, D66, D68, D72, E77, D103, D105, D107, Y109, E114, D144, D146, D148, K150, and E155 each coordinate Ca(2+).

It belongs to the calcineurin regulatory subunit family. As to quaternary structure, composed of a catalytic subunit (A) and a regulatory subunit (B).

Its function is as follows. Regulatory subunit of calcineurin, a calcium-dependent, calmodulin stimulated protein phosphatase. Confers calcium sensitivity. The chain is Calcineurin subunit B (cnb1) from Schizosaccharomyces pombe (strain 972 / ATCC 24843) (Fission yeast).